Here is a 644-residue protein sequence, read N- to C-terminus: Exoribonuclease 2 (644 aa).

Residues 189-516 (REDLTSLDFV…NHRLLKAVIK (328 aa)) form the RNB domain. The S1 motif domain occupies 561-643 (GTRFAAEIVD…ETRSIIARPV (83 aa)).

The protein belongs to the RNR ribonuclease family. RNase II subfamily.

It is found in the cytoplasm. It catalyses the reaction Exonucleolytic cleavage in the 3'- to 5'-direction to yield nucleoside 5'-phosphates.. Involved in mRNA degradation. Hydrolyzes single-stranded polyribonucleotides processively in the 3' to 5' direction. This Shigella flexneri protein is Exoribonuclease 2.